We begin with the raw amino-acid sequence, 85 residues long: MAHKKGQGSTQNNRDSAGRRLGVKKYGGEVVIPGNIIIRQRGTKIHPGKNVGMGKDHTIFALVAGVVTFHRKDKKRQQVSIVPAA.

The disordered stretch occupies residues 1 to 22 (MAHKKGQGSTQNNRDSAGRRLG).

This sequence belongs to the bacterial ribosomal protein bL27 family.

This Sulfurimonas denitrificans (strain ATCC 33889 / DSM 1251) (Thiomicrospira denitrificans (strain ATCC 33889 / DSM 1251)) protein is Large ribosomal subunit protein bL27.